Here is a 159-residue protein sequence, read N- to C-terminus: Large ribosomal subunit protein uL15 (159 aa).

The interval 1 to 39 (MKLNELSPADGSTKKRMRVGRGVGSGKGKTAGRGVKGQN) is disordered. A compositionally biased stretch (gly residues) spans 21–35 (RGVGSGKGKTAGRGV).

It belongs to the universal ribosomal protein uL15 family. As to quaternary structure, part of the 50S ribosomal subunit.

Binds to the 23S rRNA. The sequence is that of Large ribosomal subunit protein uL15 from Hyphomonas neptunium (strain ATCC 15444).